Reading from the N-terminus, the 186-residue chain is MNYVDQNKRKWLSLGGIALGISILPNSVLAMVSTPKPRILTFRNINTGERLSGEFSLAKGFSPAMLKKLDYLMRDKRTNQVHKMDPNLFQKFYNIQTNLGLRNAEIEVICGYRSASTNAMRRRQSRGVAKNSYHIKGKAIDFRIAGVPLIKVKSSAESLRNGGVGYYPTSNFIHVDTGPVRTWKGV.

An N-terminal signal peptide occupies residues 1–30 (MNYVDQNKRKWLSLGGIALGISILPNSVLA). The Zn(2+) site is built by His134, Asp141, and His174.

This sequence belongs to the peptidase M15 family. Requires Zn(2+) as cofactor.

It participates in cell wall biogenesis; cell wall polysaccharide biosynthesis. Its function is as follows. L,D-endopeptidase that cleaves meso-diaminopimelic acid (mDAP)-mDAP cross-links in peptidoglycan. It works in conjunction with other elongation-specific D,D-endopeptidases to make space for efficient incorporation of nascent peptidoglycan strands into the sacculus and thus enable cell wall expansion. The chain is Probable peptidoglycan L,D-endopeptidase MepK from Haemophilus influenzae (strain ATCC 51907 / DSM 11121 / KW20 / Rd).